Here is a 102-residue protein sequence, read N- to C-terminus: NADH-quinone oxidoreductase subunit K (102 aa).

The next 3 helical transmembrane spans lie at 6–26 (MEHGLLLAAVLFCIGLCGLLI), 30–50 (LLFILMSIEIMMNASALAFVV), and 65–85 (ILVISLAAAEASIGLALLLLL).

It belongs to the complex I subunit 4L family. NDH-1 is composed of 14 different subunits. Subunits NuoA, H, J, K, L, M, N constitute the membrane sector of the complex.

It localises to the cell inner membrane. It catalyses the reaction a quinone + NADH + 5 H(+)(in) = a quinol + NAD(+) + 4 H(+)(out). Functionally, NDH-1 shuttles electrons from NADH, via FMN and iron-sulfur (Fe-S) centers, to quinones in the respiratory chain. The immediate electron acceptor for the enzyme in this species is believed to be ubiquinone. Couples the redox reaction to proton translocation (for every two electrons transferred, four hydrogen ions are translocated across the cytoplasmic membrane), and thus conserves the redox energy in a proton gradient. This Aeromonas hydrophila subsp. hydrophila (strain ATCC 7966 / DSM 30187 / BCRC 13018 / CCUG 14551 / JCM 1027 / KCTC 2358 / NCIMB 9240 / NCTC 8049) protein is NADH-quinone oxidoreductase subunit K.